The sequence spans 239 residues: UDP-2,3-diacylglucosamine hydrolase (239 aa).

Mn(2+) is bound by residues Asp8, His10, Asp41, Asn78, and His113. 78–79 (NR) is a binding site for substrate. Substrate contacts are provided by Asp121, Ser159, Asn163, Lys166, and His194. 2 residues coordinate Mn(2+): His194 and His196.

It belongs to the LpxH family. Mn(2+) is required as a cofactor.

Its subcellular location is the cell inner membrane. It carries out the reaction UDP-2-N,3-O-bis[(3R)-3-hydroxytetradecanoyl]-alpha-D-glucosamine + H2O = 2-N,3-O-bis[(3R)-3-hydroxytetradecanoyl]-alpha-D-glucosaminyl 1-phosphate + UMP + 2 H(+). It participates in glycolipid biosynthesis; lipid IV(A) biosynthesis; lipid IV(A) from (3R)-3-hydroxytetradecanoyl-[acyl-carrier-protein] and UDP-N-acetyl-alpha-D-glucosamine: step 4/6. Hydrolyzes the pyrophosphate bond of UDP-2,3-diacylglucosamine to yield 2,3-diacylglucosamine 1-phosphate (lipid X) and UMP by catalyzing the attack of water at the alpha-P atom. Involved in the biosynthesis of lipid A, a phosphorylated glycolipid that anchors the lipopolysaccharide to the outer membrane of the cell. The chain is UDP-2,3-diacylglucosamine hydrolase from Shewanella oneidensis (strain ATCC 700550 / JCM 31522 / CIP 106686 / LMG 19005 / NCIMB 14063 / MR-1).